Consider the following 141-residue polypeptide: Large ribosomal subunit protein bL17 (141 aa).

Positions 120–141 are disordered; that stretch reads TSAKGQDSGPVLTADEDEFEAA.

It belongs to the bacterial ribosomal protein bL17 family. As to quaternary structure, part of the 50S ribosomal subunit. Contacts protein L32.

The chain is Large ribosomal subunit protein bL17 from Novosphingobium aromaticivorans (strain ATCC 700278 / DSM 12444 / CCUG 56034 / CIP 105152 / NBRC 16084 / F199).